Reading from the N-terminus, the 293-residue chain is ATP synthase gamma chain (293 aa).

It belongs to the ATPase gamma chain family. F-type ATPases have 2 components, CF(1) - the catalytic core - and CF(0) - the membrane proton channel. CF(1) has five subunits: alpha(3), beta(3), gamma(1), delta(1), epsilon(1). CF(0) has three main subunits: a, b and c.

It localises to the cell membrane. In terms of biological role, produces ATP from ADP in the presence of a proton gradient across the membrane. The gamma chain is believed to be important in regulating ATPase activity and the flow of protons through the CF(0) complex. This is ATP synthase gamma chain from Streptococcus gordonii (strain Challis / ATCC 35105 / BCRC 15272 / CH1 / DL1 / V288).